Reading from the N-terminus, the 227-residue chain is Probable N-acetyltransferase family 8 member 5 (227 aa).

A run of 3 helical transmembrane segments spans residues 29 to 49 (IPAAFRYTLLLPQTLLFLFVM), 53 to 73 (IVLVFGSWLLAVICIFFLLLL), and 201 to 221 (ISIIKWLITFSIIHFTYSFPS). Residues 69 to 213 (FLLLLLRLLA…IKWLITFSII (145 aa)) form the N-acetyltransferase domain.

Belongs to the camello family.

Its subcellular location is the membrane. May play a role in regulation of gastrulation. The chain is Probable N-acetyltransferase family 8 member 5 from Mus musculus (Mouse).